Reading from the N-terminus, the 351-residue chain is Protein FAM118B (351 aa).

Ala2 bears the N-acetylalanine mark. Ser9 bears the Phosphoserine mark.

Belongs to the FAM118 family.

The protein resides in the nucleus. The protein localises to the cajal body. In terms of biological role, may play a role in Cajal bodies formation. This chain is Protein FAM118B (FAM118B), found in Bos taurus (Bovine).